Reading from the N-terminus, the 90-residue chain is Small ribosomal subunit protein bS18 (90 aa).

This sequence belongs to the bacterial ribosomal protein bS18 family. Part of the 30S ribosomal subunit. Forms a tight heterodimer with protein bS6.

Its function is as follows. Binds as a heterodimer with protein bS6 to the central domain of the 16S rRNA, where it helps stabilize the platform of the 30S subunit. This Porphyromonas gingivalis (strain ATCC 33277 / DSM 20709 / CIP 103683 / JCM 12257 / NCTC 11834 / 2561) protein is Small ribosomal subunit protein bS18.